The sequence spans 122 residues: Small ribosomal subunit protein uS12 (122 aa).

Position 89 is a 3-methylthioaspartic acid (aspartate 89).

Belongs to the universal ribosomal protein uS12 family. As to quaternary structure, part of the 30S ribosomal subunit. Contacts proteins S8 and S17. May interact with IF1 in the 30S initiation complex.

In terms of biological role, with S4 and S5 plays an important role in translational accuracy. Functionally, interacts with and stabilizes bases of the 16S rRNA that are involved in tRNA selection in the A site and with the mRNA backbone. Located at the interface of the 30S and 50S subunits, it traverses the body of the 30S subunit contacting proteins on the other side and probably holding the rRNA structure together. The combined cluster of proteins S8, S12 and S17 appears to hold together the shoulder and platform of the 30S subunit. This Neorickettsia sennetsu (strain ATCC VR-367 / Miyayama) (Ehrlichia sennetsu) protein is Small ribosomal subunit protein uS12.